The following is a 202-amino-acid chain: Thymidylate kinase (202 aa).

ATP is bound at residue 7 to 14 (GIDGSGKT).

This sequence belongs to the thymidylate kinase family.

The enzyme catalyses dTMP + ATP = dTDP + ADP. In terms of biological role, phosphorylation of dTMP to form dTDP in both de novo and salvage pathways of dTTP synthesis. The protein is Thymidylate kinase of Ehrlichia ruminantium (strain Gardel).